The following is a 37-amino-acid chain: Large ribosomal subunit protein bL36c (37 aa).

It belongs to the bacterial ribosomal protein bL36 family.

The protein resides in the plastid. Its subcellular location is the chloroplast. This Pleurastrum terricola (Filamentous green alga) protein is Large ribosomal subunit protein bL36c.